Consider the following 111-residue polypeptide: uncharacterized protein (111 aa).

The HIT domain maps to 8–111; the sequence is LFLKIIKREE…HVHIIPYYKK (104 aa). Residues 100–104 carry the Histidine triad motif motif; it reads HTHVH.

This is an uncharacterized protein from Mesomycoplasma hyorhinis (Mycoplasma hyorhinis).